Reading from the N-terminus, the 41-residue chain is Putative toxic protein TimP (41 aa).

The chain crosses the lipid bilayer at residues 1-17 (MKIRCFCIVLIVSGALL).

Belongs to the TimP toxin family.

The protein localises to the cell inner membrane. In terms of biological role, putative toxic component of a potential type I toxin-antitoxin (TA) system. Neutralized by sRNA antitoxin TimR which binds to the 5' UTR of timP mRNA and inhibits translation. The antitoxin gene is encoded immediately upstream and transcribed divergently from the toxin gene; antitoxin RNA is less stable than timP mRNA. In Escherichia coli (strain K12), this protein is Putative toxic protein TimP.